Consider the following 314-residue polypeptide: Methionyl-tRNA formyltransferase (314 aa).

109 to 112 (SVLP) provides a ligand contact to (6S)-5,6,7,8-tetrahydrofolate.

Belongs to the Fmt family.

It catalyses the reaction L-methionyl-tRNA(fMet) + (6R)-10-formyltetrahydrofolate = N-formyl-L-methionyl-tRNA(fMet) + (6S)-5,6,7,8-tetrahydrofolate + H(+). Its function is as follows. Attaches a formyl group to the free amino group of methionyl-tRNA(fMet). The formyl group appears to play a dual role in the initiator identity of N-formylmethionyl-tRNA by promoting its recognition by IF2 and preventing the misappropriation of this tRNA by the elongation apparatus. This is Methionyl-tRNA formyltransferase from Dictyoglomus turgidum (strain DSM 6724 / Z-1310).